A 59-amino-acid polypeptide reads, in one-letter code: Large ribosomal subunit protein uL30 (59 aa).

It belongs to the universal ribosomal protein uL30 family. In terms of assembly, part of the 50S ribosomal subunit.

This chain is Large ribosomal subunit protein uL30, found in Herminiimonas arsenicoxydans.